Here is a 477-residue protein sequence, read N- to C-terminus: Glycogen synthase (477 aa).

ADP-alpha-D-glucose is bound at residue Lys15.

This sequence belongs to the glycosyltransferase 1 family. Bacterial/plant glycogen synthase subfamily.

It carries out the reaction [(1-&gt;4)-alpha-D-glucosyl](n) + ADP-alpha-D-glucose = [(1-&gt;4)-alpha-D-glucosyl](n+1) + ADP + H(+). Its pathway is glycan biosynthesis; glycogen biosynthesis. Its function is as follows. Synthesizes alpha-1,4-glucan chains using ADP-glucose. This is Glycogen synthase from Shigella boydii serotype 18 (strain CDC 3083-94 / BS512).